A 216-amino-acid chain; its full sequence is UDP-N-acetylbacillosamine N-acetyltransferase (216 aa).

Histidine 137 (proton acceptor) is an active-site residue. Histidine 146 lines the acetyl-CoA pocket.

Belongs to the transferase hexapeptide repeat family. Forms oligomers.

It catalyses the reaction UDP-N-acetylbacillosamine + acetyl-CoA = UDP-N,N'-diacetylbacillosamine + CoA + H(+). Catalyzes the conversion of UDP-2,4,6-trideoxy-2-acetamido-4-amino glucose to UDP-2,4,6-trideoxy-2,4-diacetamido glucose, commonly known as UDP-N,N'-diacetylbacillosamine (UDP-diNAcBac). In Bacillus subtilis (strain 168), this protein is UDP-N-acetylbacillosamine N-acetyltransferase.